Consider the following 244-residue polypeptide: Ribosomal RNA small subunit methyltransferase NEP1 (244 aa).

Positions 1-33 (MSAASGGFQPRERRFSVQEQDWETTPPKKLRLG) are disordered. Phosphoserine occurs at positions 5 and 16. Residues T176, G201, G206, and 219-224 (ISNYPL) contribute to the S-adenosyl-L-methionine site.

Belongs to the class IV-like SAM-binding methyltransferase superfamily. RNA methyltransferase NEP1 family. In terms of assembly, homodimer. Part of the small subunit (SSU) processome, composed of more than 70 proteins and the RNA chaperone small nucleolar RNA (snoRNA) U3.

The protein resides in the nucleus. It is found in the nucleolus. It carries out the reaction pseudouridine(1248) in human 18S rRNA + S-adenosyl-L-methionine = N(1)-methylpseudouridine(1248) in human 18S rRNA + S-adenosyl-L-homocysteine + H(+). In terms of biological role, S-adenosyl-L-methionine-dependent pseudouridine N(1)-methyltransferase that methylates pseudouridine at position in 18S rRNA. Involved the biosynthesis of the hypermodified N1-methyl-N3-(3-amino-3-carboxypropyl) pseudouridine (m1acp3-Psi) conserved in eukaryotic 18S rRNA. Is not able to methylate uridine at this position. Also has an essential role in 40S ribosomal subunit biogenesis independent on its methyltransferase activity, facilitating the incorporation of ribosomal protein S19 during the formation of pre-ribosomes. Part of the small subunit (SSU) processome, first precursor of the small eukaryotic ribosomal subunit. During the assembly of the SSU processome in the nucleolus, many ribosome biogenesis factors, an RNA chaperone and ribosomal proteins associate with the nascent pre-rRNA and work in concert to generate RNA folding, modifications, rearrangements and cleavage as well as targeted degradation of pre-ribosomal RNA by the RNA exosome. The chain is Ribosomal RNA small subunit methyltransferase NEP1 from Mus musculus (Mouse).